Consider the following 977-residue polypeptide: Ephrin type-A receptor 2 (977 aa).

Residues 1–25 (MELRAVGFCLALLWGCALAAAAAQG) form the signal peptide. Residues 1 to 205 (MELRAVGFCL…YYKKCPEMLQ (205 aa)) are mediates interaction with CLDN4. Residues 26 to 538 (KEVVLLDFAA…STEGSANMAV (513 aa)) lie on the Extracellular side of the membrane. Residues 27 to 205 (EVVLLDFAAM…YYKKCPEMLQ (179 aa)) enclose the Eph LBD domain. 2 disulfide bridges follow: Cys69/Cys187 and Cys104/Cys114. Residues 329 to 433 (PPSAPNYLTA…TSRSFRTASV (105 aa)) form the Fibronectin type-III 1 domain. N-linked (GlcNAc...) asparagine glycosylation is found at Asn408 and Asn436. The 92-residue stretch at 439–530 (EPPKVRLEDR…KVHEFQTLST (92 aa)) folds into the Fibronectin type-III 2 domain. Residues 539–559 (IGGVAVGVVLLLVLAGVGLFI) form a helical membrane-spanning segment. Residues 560–977 (HRRRRNLRAR…DQVNTVGIPI (418 aa)) are Cytoplasmic-facing. Residues Ser571 and Ser580 each carry the phosphoserine modification. Phosphotyrosine; by autocatalysis occurs at positions 589 and 595. The mediates interaction with ARHGEF16 stretch occupies residues 607 to 907 (TEIHPSCVAR…STSGSEGVPF (301 aa)). The region spanning 614–876 (VARQKVIGAG…DIVSILDKLI (263 aa)) is the Protein kinase domain. 620 to 628 (IGAGEFGEV) lines the ATP pocket. Tyr629 carries the post-translational modification Phosphotyrosine. Lys647 contributes to the ATP binding site. Thr648 is modified (phosphothreonine). Phosphotyrosine; by autocatalysis is present on Tyr736. Asp740 functions as the Proton acceptor in the catalytic mechanism. At Tyr773 the chain carries Phosphotyrosine; by autocatalysis. Ser870, Ser893, Ser898, and Ser902 each carry phosphoserine. Residues 887–977 (DFDPRVSIRL…DQVNTVGIPI (91 aa)) form a negatively regulates interaction with ARHGEF16 region. The SAM domain occupies 905 to 969 (VPFRTVSEWL…AYSLLGLKDQ (65 aa)). The residue at position 922 (Tyr922) is a Phosphotyrosine; by autocatalysis. The residue at position 931 (Tyr931) is a Phosphotyrosine. The PDZ-binding signature appears at 975 to 977 (IPI).

The protein belongs to the protein kinase superfamily. Tyr protein kinase family. Ephrin receptor subfamily. As to quaternary structure, homodimer. Interacts with INPPL1; regulates activated EPHA2 endocytosis and degradation. Interacts (inactivated form) with PTK2/FAK1 and interacts (EFNA1 ligand-activated form) with PTPN11; regulates integrin-mediated adhesion. Interacts with ARHGEF16, DOCK4 and ELMO2; mediates ligand-independent activation of RAC1 which stimulates cell migration. Interacts with CLDN4; phosphorylates CLDN4 and may regulate tight junctions. Interacts with ACP1. Interacts with CEMIP. Interacts with NCK1; may regulate EPHA2 activity in cell migration and adhesion. Interacts with SLA. Interacts (phosphorylated form) with VAV2, VAV3 and PI3-kinase p85 subunit (PIK3R1, PIK3R2 or PIK3R3); critical for the EFNA1-induced activation of RAC1 which stimulates cell migration. Interacts with ANKS1A. Interacts with TIMD4. In terms of processing, autophosphorylates. Phosphorylated at Ser-898 by PKB; serum-induced phosphorylation which targets EPHA2 to the cell leading edge and stimulates cell migration. Phosphorylation by PKB is inhibited by EFNA1-activated EPHA2 which regulates PKB activity via a reciprocal regulatory loop. Phosphorylated on tyrosine upon binding and activation by EFNA1. Phosphorylated residues Tyr-589 and Tyr-595 are required for binding VAV2 and VAV3 while phosphorylated residues Tyr-736 and Tyr-931 are required for binding PI3-kinase p85 subunit (PIK3R1, PIK3R2 or PIK3R3). These phosphorylated residues are critical for recruitment of VAV2 and VAV3 and PI3-kinase p85 subunit which transduce downstream signaling to activate RAC1 GTPase and cell migration. Dephosphorylation of Tyr-931 by PTPRF prevents the interaction of EPHA2 with NCK1. Phosphorylated at Ser-898 in response to TNF by RPS6KA1 and RPS6KA3; RPS6KA-EPHA2 signaling pathway controls cell migration. Phosphorylated at Ser-898 by PKA; blocks cell retraction induced by EPHA2 kinase activity. Dephosphorylated by ACP1. Post-translationally, ubiquitinated by CHIP/STUB1. Ubiquitination is regulated by the HSP90 chaperone and regulates the receptor stability and activity through proteasomal degradation. ANKS1A prevents ubiquitination and degradation. In terms of tissue distribution, expressed in the lung, intestine and liver. Expressed in myogenic progenitor cells.

Its subcellular location is the cell membrane. The protein localises to the cell projection. The protein resides in the ruffle membrane. It localises to the lamellipodium membrane. It is found in the cell junction. Its subcellular location is the focal adhesion. The enzyme catalyses L-tyrosyl-[protein] + ATP = O-phospho-L-tyrosyl-[protein] + ADP + H(+). Functionally, receptor tyrosine kinase which binds promiscuously membrane-bound ephrin-A family ligands residing on adjacent cells, leading to contact-dependent bidirectional signaling into neighboring cells. The signaling pathway downstream of the receptor is referred to as forward signaling while the signaling pathway downstream of the ephrin ligand is referred to as reverse signaling. Activated by the ligand ephrin-A1/EFNA1 regulates migration, integrin-mediated adhesion, proliferation and differentiation of cells. Regulates cell adhesion and differentiation through DSG1/desmoglein-1 and inhibition of the ERK1/ERK2 signaling pathway. May also participate in UV radiation-induced apoptosis and have a ligand-independent stimulatory effect on chemotactic cell migration. During development, may function in distinctive aspects of pattern formation and subsequently in development of several fetal tissues. Involved for instance in angiogenesis, in early hindbrain development and epithelial proliferation and branching morphogenesis during mammary gland development. Engaged by the ligand ephrin-A5/EFNA5 may regulate lens fiber cells shape and interactions and be important for lens transparency development and maintenance. With ephrin-A2/EFNA2 may play a role in bone remodeling through regulation of osteoclastogenesis and osteoblastogenesis. The chain is Ephrin type-A receptor 2 (Epha2) from Mus musculus (Mouse).